The primary structure comprises 94 residues: Aspartyl/glutamyl-tRNA(Asn/Gln) amidotransferase subunit C (94 aa).

This sequence belongs to the GatC family. As to quaternary structure, heterotrimer of A, B and C subunits.

The enzyme catalyses L-glutamyl-tRNA(Gln) + L-glutamine + ATP + H2O = L-glutaminyl-tRNA(Gln) + L-glutamate + ADP + phosphate + H(+). The catalysed reaction is L-aspartyl-tRNA(Asn) + L-glutamine + ATP + H2O = L-asparaginyl-tRNA(Asn) + L-glutamate + ADP + phosphate + 2 H(+). Allows the formation of correctly charged Asn-tRNA(Asn) or Gln-tRNA(Gln) through the transamidation of misacylated Asp-tRNA(Asn) or Glu-tRNA(Gln) in organisms which lack either or both of asparaginyl-tRNA or glutaminyl-tRNA synthetases. The reaction takes place in the presence of glutamine and ATP through an activated phospho-Asp-tRNA(Asn) or phospho-Glu-tRNA(Gln). The sequence is that of Aspartyl/glutamyl-tRNA(Asn/Gln) amidotransferase subunit C from Syntrophomonas wolfei subsp. wolfei (strain DSM 2245B / Goettingen).